The sequence spans 343 residues: Tetraacyldisaccharide 4'-kinase (343 aa).

53–60 (TCGGAGKT) contributes to the ATP binding site.

Belongs to the LpxK family.

It catalyses the reaction a lipid A disaccharide + ATP = a lipid IVA + ADP + H(+). The protein operates within glycolipid biosynthesis; lipid IV(A) biosynthesis; lipid IV(A) from (3R)-3-hydroxytetradecanoyl-[acyl-carrier-protein] and UDP-N-acetyl-alpha-D-glucosamine: step 6/6. Its function is as follows. Transfers the gamma-phosphate of ATP to the 4'-position of a tetraacyldisaccharide 1-phosphate intermediate (termed DS-1-P) to form tetraacyldisaccharide 1,4'-bis-phosphate (lipid IVA). This Bartonella quintana (strain Toulouse) (Rochalimaea quintana) protein is Tetraacyldisaccharide 4'-kinase.